Consider the following 427-residue polypeptide: Glutamate-1-semialdehyde 2,1-aminomutase (427 aa).

Lys-268 carries the post-translational modification N6-(pyridoxal phosphate)lysine.

This sequence belongs to the class-III pyridoxal-phosphate-dependent aminotransferase family. HemL subfamily. Pyridoxal 5'-phosphate serves as cofactor.

The protein localises to the cytoplasm. It carries out the reaction (S)-4-amino-5-oxopentanoate = 5-aminolevulinate. It participates in porphyrin-containing compound metabolism; protoporphyrin-IX biosynthesis; 5-aminolevulinate from L-glutamyl-tRNA(Glu): step 2/2. In Methanococcus vannielii (strain ATCC 35089 / DSM 1224 / JCM 13029 / OCM 148 / SB), this protein is Glutamate-1-semialdehyde 2,1-aminomutase.